Here is a 451-residue protein sequence, read N- to C-terminus: CBL-interacting protein kinase 10 (451 aa).

The Protein kinase domain occupies tyrosine 13 to phenylalanine 267. ATP contacts are provided by residues leucine 19–valine 27 and lysine 42. Aspartate 135 (proton acceptor) is an active-site residue. An activation loop region spans residues aspartate 153–glutamate 182. One can recognise an NAF domain in the interval isoleucine 304–glutamate 336. The tract at residues lysine 341 to phenylalanine 370 is PPI.

The protein belongs to the protein kinase superfamily. CAMK Ser/Thr protein kinase family. SNF1 subfamily. It depends on Mn(2+) as a cofactor.

It catalyses the reaction L-seryl-[protein] + ATP = O-phospho-L-seryl-[protein] + ADP + H(+). The catalysed reaction is L-threonyl-[protein] + ATP = O-phospho-L-threonyl-[protein] + ADP + H(+). Functionally, CIPK serine-threonine protein kinases interact with CBL proteins. Binding of a CBL protein to the regulatory NAF domain of CIPK protein lead to the activation of the kinase in a calcium-dependent manner. This Oryza sativa subsp. japonica (Rice) protein is CBL-interacting protein kinase 10 (CIPK10).